Here is a 591-residue protein sequence, read N- to C-terminus: Metalloendopeptidase OPG085 (591 aa).

Zn(2+) is bound at residue His-41. The active site involves Glu-44. A Zn(2+)-binding site is contributed by His-45.

It belongs to the peptidase M44 family. The cofactor is Zn(2+). In terms of processing, undergoes proteolytic processing during the course of infection. May be cleaved into 46 kDa and 22 kDa products (Potential).

The protein localises to the virion. Its function is as follows. Probably involved in maturation of some viral proteins by processing them preferentially at Ala-Gly-|-Ser/Thr/Lys motifs. Does not seem to be responsible for the cleavage of major core proteins. In Homo sapiens (Human), this protein is Metalloendopeptidase OPG085 (OPG085).